The chain runs to 158 residues: MQGNLSSWLVKHGLVHRSLGFDYQGIETLQIKPEEWHSIAVILYVYGYNYLRSQCAYDVAPGGLLASVYHLTRIEYGIDQPEEVCIKVFAARINPRIPSVFWVWKSADFPERESYDMLGIYYDNHPRLKRILMPESWVGWPLRKDYIAPNFYEIQDAH.

Belongs to the complex I 30 kDa subunit family. NDH is composed of at least 16 different subunits, 5 of which are encoded in the nucleus.

It localises to the plastid. The protein resides in the chloroplast thylakoid membrane. The enzyme catalyses a plastoquinone + NADH + (n+1) H(+)(in) = a plastoquinol + NAD(+) + n H(+)(out). It catalyses the reaction a plastoquinone + NADPH + (n+1) H(+)(in) = a plastoquinol + NADP(+) + n H(+)(out). In terms of biological role, NDH shuttles electrons from NAD(P)H:plastoquinone, via FMN and iron-sulfur (Fe-S) centers, to quinones in the photosynthetic chain and possibly in a chloroplast respiratory chain. The immediate electron acceptor for the enzyme in this species is believed to be plastoquinone. Couples the redox reaction to proton translocation, and thus conserves the redox energy in a proton gradient. In Cucumis sativus (Cucumber), this protein is NAD(P)H-quinone oxidoreductase subunit J, chloroplastic.